Reading from the N-terminus, the 186-residue chain is Peptidyl-tRNA hydrolase (186 aa).

Residue Tyr-14 participates in tRNA binding. The active-site Proton acceptor is His-19. TRNA contacts are provided by Phe-65, Asn-67, and Asn-113.

This sequence belongs to the PTH family. As to quaternary structure, monomer.

It is found in the cytoplasm. It carries out the reaction an N-acyl-L-alpha-aminoacyl-tRNA + H2O = an N-acyl-L-amino acid + a tRNA + H(+). In terms of biological role, hydrolyzes ribosome-free peptidyl-tRNAs (with 1 or more amino acids incorporated), which drop off the ribosome during protein synthesis, or as a result of ribosome stalling. Functionally, catalyzes the release of premature peptidyl moieties from peptidyl-tRNA molecules trapped in stalled 50S ribosomal subunits, and thus maintains levels of free tRNAs and 50S ribosomes. The polypeptide is Peptidyl-tRNA hydrolase (Limosilactobacillus reuteri (strain DSM 20016) (Lactobacillus reuteri)).